The chain runs to 292 residues: Inhibitory synaptic factor 1 (292 aa).

Disordered stretches follow at residues 1–25 (MNIR…RERI), 122–186 (SDSV…ERVR), and 198–292 (CDDE…KGKN). Positions 23 to 63 (ERIRQRMKMVIGQLEDILRELKEVAKELREVVSQIDKLTSD) form a coiled coil. Over residues 198 to 214 (CDDEEGDGEEEAAEEEG) the composition is skewed to acidic residues. The span at 263–285 (RNSSTQTVSDKSTQTVLPYTATR) shows a compositional bias: polar residues.

This sequence belongs to the INSYN1 family. In terms of assembly, interacts with GPHN.

The protein resides in the postsynaptic density. In terms of biological role, component of the protein machinery at the inhibitory synapses, probably acting as a scaffold. Inhibitory synapses dampen neuronal activity through postsynaptic hyperpolarization. This synaptic inhibition is fundamental for the functioning of the central nervous system, shaping and orchestrating the flow of information through neuronal networks to generate a precise neural code. The chain is Inhibitory synaptic factor 1 from Bos taurus (Bovine).